We begin with the raw amino-acid sequence, 35 residues long: Kappa-theraphotoxin-Tb1a (35 aa).

Disulfide bonds link Cys3–Cys18, Cys10–Cys23, and Cys17–Cys30.

Belongs to the neurotoxin 10 (Hwtx-1) family. 59 (Tltx) subfamily. In terms of assembly, monomer. As to expression, expressed by the venom gland.

Its subcellular location is the secreted. In terms of biological role, blocks Kv4.2/KCND2 voltage-gated potassium channels (IC(50) is 193.0 nM) by shifting the voltage-dependence of channel activation to more depolarized potentials. The toxin is thought to bind to the S3-S4 linker region of the voltage sensor domain. This Theraphosa blondi (Goliath birdeating spider) protein is Kappa-theraphotoxin-Tb1a.